A 282-amino-acid polypeptide reads, in one-letter code: Aldo-keto reductase ML1669 (282 aa).

Residue tyrosine 57 is the Proton donor of the active site. The NADPH site is built by leucine 197, valine 235, arginine 237, serine 238, alanine 239, serine 246, asparagine 247, and arginine 273.

The protein belongs to the aldo/keto reductase family.

The chain is Aldo-keto reductase ML1669 from Mycobacterium leprae (strain TN).